A 147-amino-acid polypeptide reads, in one-letter code: MADFEMVLKHWGPVEADYATHGNLVLTRLFTEHPETQKLFPKFAGIAKADMAGNAAISAHGATVLKKLGELLKAKGSHAAIIKPMANSHATKHKIPIKNFELISEVIGKVMHEKAGLDAAGQKALKNVMTTIIADIEANYKELGFTG.

A Globin domain is found at 2–137 (ADFEMVLKHW…VMTTIIADIE (136 aa)). Histidine 60 is a nitrite binding site. Histidine 60 lines the O2 pocket. Histidine 89 is a heme b binding site.

Belongs to the globin family. Monomeric.

The protein localises to the cytoplasm. It is found in the sarcoplasm. It catalyses the reaction Fe(III)-heme b-[protein] + nitric oxide + H2O = Fe(II)-heme b-[protein] + nitrite + 2 H(+). The enzyme catalyses H2O2 + AH2 = A + 2 H2O. In terms of biological role, monomeric heme protein which primary function is to store oxygen and facilitate its diffusion within muscle tissues. Reversibly binds oxygen through a pentacoordinated heme iron and enables its timely and efficient release as needed during periods of heightened demand. Depending on the oxidative conditions of tissues and cells, and in addition to its ability to bind oxygen, it also has a nitrite reductase activity whereby it regulates the production of bioactive nitric oxide. Under stress conditions, like hypoxia and anoxia, it also protects cells against reactive oxygen species thanks to its pseudoperoxidase activity. The chain is Myoglobin (mb) from Makaira nigricans (Atlantic blue marlin).